The sequence spans 281 residues: RAD52 motif-containing protein 1 (281 aa).

The tract at residues 1–92 (MAELISFVVP…KPLFQTSPVK (92 aa)) is necessary for nuclear localization and for nucleolar accumulation in response to heat shock. The 84-residue stretch at 15–98 (KVLLVWDLST…SPVKVRLGTR (84 aa)) folds into the RRM domain. The tract at residues 90–133 (PVKVRLGTRHKALQHQAFALNSSRCQELANYYFGFSGWSKRIIK) is necessary for nuclear and nucleolar localization.

Homodimer.

Its subcellular location is the nucleus. The protein localises to the cytoplasm. It is found in the nucleolus. The protein resides in the cajal body. It localises to the PML body. May confer resistance to the antitumor agent cisplatin. Binds to DNA and RNA. The sequence is that of RAD52 motif-containing protein 1 (Rdm1) from Mus musculus (Mouse).